The chain runs to 355 residues: Methylthioribose-1-phosphate isomerase (355 aa).

Substrate is bound by residues 50 to 52 (RGA), Arg-93, and Gln-198. Asp-239 acts as the Proton donor in catalysis. A substrate-binding site is contributed by 249–250 (NK).

Belongs to the eIF-2B alpha/beta/delta subunits family. MtnA subfamily. Homodimer.

The enzyme catalyses 5-(methylsulfanyl)-alpha-D-ribose 1-phosphate = 5-(methylsulfanyl)-D-ribulose 1-phosphate. It participates in amino-acid biosynthesis; L-methionine biosynthesis via salvage pathway; L-methionine from S-methyl-5-thio-alpha-D-ribose 1-phosphate: step 1/6. Functionally, catalyzes the interconversion of methylthioribose-1-phosphate (MTR-1-P) into methylthioribulose-1-phosphate (MTRu-1-P). This chain is Methylthioribose-1-phosphate isomerase, found in Geobacillus thermodenitrificans (strain NG80-2).